We begin with the raw amino-acid sequence, 241 residues long: 1-(5-phosphoribosyl)-5-[(5-phosphoribosylamino)methylideneamino] imidazole-4-carboxamide isomerase (241 aa).

The Proton acceptor role is filled by aspartate 8. Residue aspartate 129 is the Proton donor of the active site.

This sequence belongs to the HisA/HisF family.

It is found in the cytoplasm. The enzyme catalyses 1-(5-phospho-beta-D-ribosyl)-5-[(5-phospho-beta-D-ribosylamino)methylideneamino]imidazole-4-carboxamide = 5-[(5-phospho-1-deoxy-D-ribulos-1-ylimino)methylamino]-1-(5-phospho-beta-D-ribosyl)imidazole-4-carboxamide. It functions in the pathway amino-acid biosynthesis; L-histidine biosynthesis; L-histidine from 5-phospho-alpha-D-ribose 1-diphosphate: step 4/9. This chain is 1-(5-phosphoribosyl)-5-[(5-phosphoribosylamino)methylideneamino] imidazole-4-carboxamide isomerase, found in Chloroflexus aurantiacus (strain ATCC 29364 / DSM 637 / Y-400-fl).